The primary structure comprises 539 residues: Phosphoenolpyruvate carboxykinase (ATP) (539 aa).

Arg64, Tyr206, and Lys212 together coordinate substrate. Residues Lys212, His231, and 247–255 contribute to the ATP site; that span reads GLSGTGKTT. Residues Lys212 and His231 each contribute to the Mn(2+) site. A Mn(2+)-binding site is contributed by Asp268. ATP-binding positions include Glu296, Arg332, 448 to 449, and Thr454; that span reads RI. Arg332 lines the substrate pocket.

The protein belongs to the phosphoenolpyruvate carboxykinase (ATP) family. In terms of assembly, monomer. Mn(2+) serves as cofactor.

The protein localises to the cytoplasm. The enzyme catalyses oxaloacetate + ATP = phosphoenolpyruvate + ADP + CO2. It participates in carbohydrate biosynthesis; gluconeogenesis. Functionally, involved in the gluconeogenesis. Catalyzes the conversion of oxaloacetate (OAA) to phosphoenolpyruvate (PEP) through direct phosphoryl transfer between the nucleoside triphosphate and OAA. The protein is Phosphoenolpyruvate carboxykinase (ATP) of Salmonella agona (strain SL483).